A 380-amino-acid chain; its full sequence is Cytochrome b (380 aa).

The next 4 helical transmembrane spans lie at Phe-33 to Met-53, Trp-77 to Ile-98, Trp-113 to Leu-133, and Phe-178 to Leu-198. Heme b contacts are provided by His-83 and His-97. Heme b-binding residues include His-182 and His-196. His-201 serves as a coordination point for a ubiquinone. Transmembrane regions (helical) follow at residues Ile-226–Ser-246, Leu-288–His-308, Leu-320–Gly-340, and Phe-347–Pro-367.

The protein belongs to the cytochrome b family. In terms of assembly, the cytochrome bc1 complex contains 11 subunits: 3 respiratory subunits (MT-CYB, CYC1 and UQCRFS1), 2 core proteins (UQCRC1 and UQCRC2) and 6 low-molecular weight proteins (UQCRH/QCR6, UQCRB/QCR7, UQCRQ/QCR8, UQCR10/QCR9, UQCR11/QCR10 and a cleavage product of UQCRFS1). This cytochrome bc1 complex then forms a dimer. Heme b is required as a cofactor.

It is found in the mitochondrion inner membrane. Functionally, component of the ubiquinol-cytochrome c reductase complex (complex III or cytochrome b-c1 complex) that is part of the mitochondrial respiratory chain. The b-c1 complex mediates electron transfer from ubiquinol to cytochrome c. Contributes to the generation of a proton gradient across the mitochondrial membrane that is then used for ATP synthesis. This is Cytochrome b (MT-CYB) from Gorilla gorilla gorilla (Western lowland gorilla).